The sequence spans 180 residues: Signal peptidase complex subunit 3 (180 aa).

The Cytoplasmic segment spans residues 1–11; it reads MNTVLSRANSL. The helical; Signal-anchor for type II membrane protein transmembrane segment at 12-32 threads the bilayer; it reads FAFSLSVMAALTFGCFITTAF. Topologically, residues 33-180 are lumenal; it reads KERSVPVSIA…PDTYETTKSY (148 aa). The N-linked (GlcNAc...) asparagine glycan is linked to asparagine 141.

This sequence belongs to the SPCS3 family. As to quaternary structure, component of the signal peptidase complex paralog A (SPC-A) composed of a catalytic subunit SEC11A and three accessory subunits SPCS1, SPCS2 and SPCS3. Component of the signal peptidase complex paralog C (SPC-C) composed of a catalytic subunit SEC11C and three accessory subunits SPCS1, SPCS2 and SPCS3. The complex induces a local thinning of the ER membrane which is used to measure the length of the signal peptide (SP) h-region of protein substrates. This ensures the selectivity of the complex towards h-regions shorter than 18-20 amino acids. In terms of tissue distribution, expressed in hen oviduct (at protein level).

It localises to the endoplasmic reticulum membrane. In terms of biological role, essential component of the signal peptidase complex (SPC) which catalyzes the cleavage of N-terminal signal sequences from nascent proteins as they are translocated into the lumen of the endoplasmic reticulum. Essential for the SPC catalytic activity, possibly by stabilizing and positioning the active center of the complex close to the lumenal surface. The sequence is that of Signal peptidase complex subunit 3 from Gallus gallus (Chicken).